The primary structure comprises 741 residues: Fibrinogen alpha chain (741 aa).

The first 18 residues, 1-18, serve as a signal peptide directing secretion; that stretch reads MIPVTILCVLLCLNLAWA. Residue Gln-19 is modified to Pyrrolidone carboxylic acid. Residues 67–506 adopt a coiled-coil conformation; it reads CCRMQGIIDD…STRRSYNGKD (440 aa). The tract at residues 270-307 is disordered; it reads VAEARGDSSPSHTGKLITSSHRRESPSLVDKTSSASSV. Over residues 277-288 the composition is skewed to polar residues; the sequence is SSPSHTGKLITS. Cys-310 and Cys-341 are joined by a disulfide. Low complexity-rich tracts occupy residues 381–398 and 435–449; these read STSSRHSIGSSTSSHVTG and SASHSKTVLTSSSSS. Positions 381–510 are disordered; sequence STSSRHSIGS…SYNGKDCDDI (130 aa). Polar residues predominate over residues 450 to 459; that stretch reads FNKGGSTFET. In terms of domain architecture, Fibrinogen C-terminal spans 498-739; sequence TRRSYNGKDC…VVRMKIRPLE (242 aa). Ca(2+) is bound by residues Asp-666, Asp-668, Trp-670, and Glu-672. Cys-674 and Cys-687 are oxidised to a cystine.

Heterohexamer; disulfide linked. Contains 2 sets of 3 non-identical chains (alpha, beta and gamma). The 2 heterotrimers are in head to head conformation with the N-termini in a small central domain. Conversion of fibrinogen to fibrin is triggered by thrombin, which cleaves fibrinopeptides A and B from alpha and beta chains, and thus exposes the N-terminal polymerization sites responsible for the formation of the soft clot. The soft clot is converted into the hard clot by factor XIIIA which catalyzes the epsilon-(gamma-glutamyl)lysine cross-linking between gamma chains (stronger) and between alpha chains (weaker) of different monomers. In terms of processing, forms F13A-mediated cross-links between a glutamine and the epsilon-amino group of a lysine residue, forming fibronectin-fibrinogen heteropolymers.

The protein localises to the secreted. Functionally, cleaved by the protease thrombin to yield monomers which, together with fibrinogen beta (FGB) and fibrinogen gamma (FGG), polymerize to form an insoluble fibrin matrix. Fibrin has a major function in hemostasis as one of the primary components of blood clots. The sequence is that of Fibrinogen alpha chain (FGA) from Gallus gallus (Chicken).